Here is a 705-residue protein sequence, read N- to C-terminus: Phosphoribosylformylglycinamidine synthase subunit PurL (705 aa).

H32 is a catalytic residue. Residue Y35 participates in ATP binding. E76 contacts Mg(2+). Substrate is bound by residues 77-80 (SHNH) and R99. The active-site Proton acceptor is H78. D100 provides a ligand contact to Mg(2+). Substrate is bound at residue Q224. D252 contacts Mg(2+). 296-298 (ESQ) contributes to the substrate binding site. Residues D471 and G508 each coordinate ATP. N509 is a Mg(2+) binding site. Substrate is bound at residue S511.

It belongs to the FGAMS family. As to quaternary structure, monomer. Part of the FGAM synthase complex composed of 1 PurL, 1 PurQ and 2 PurS subunits.

Its subcellular location is the cytoplasm. The catalysed reaction is N(2)-formyl-N(1)-(5-phospho-beta-D-ribosyl)glycinamide + L-glutamine + ATP + H2O = 2-formamido-N(1)-(5-O-phospho-beta-D-ribosyl)acetamidine + L-glutamate + ADP + phosphate + H(+). It participates in purine metabolism; IMP biosynthesis via de novo pathway; 5-amino-1-(5-phospho-D-ribosyl)imidazole from N(2)-formyl-N(1)-(5-phospho-D-ribosyl)glycinamide: step 1/2. Part of the phosphoribosylformylglycinamidine synthase complex involved in the purines biosynthetic pathway. Catalyzes the ATP-dependent conversion of formylglycinamide ribonucleotide (FGAR) and glutamine to yield formylglycinamidine ribonucleotide (FGAM) and glutamate. The FGAM synthase complex is composed of three subunits. PurQ produces an ammonia molecule by converting glutamine to glutamate. PurL transfers the ammonia molecule to FGAR to form FGAM in an ATP-dependent manner. PurS interacts with PurQ and PurL and is thought to assist in the transfer of the ammonia molecule from PurQ to PurL. The chain is Phosphoribosylformylglycinamidine synthase subunit PurL from Pyrococcus abyssi (strain GE5 / Orsay).